A 55-amino-acid polypeptide reads, in one-letter code: ATP synthase protein 8 (55 aa).

The helical transmembrane segment at 7–24 (NPWLFIMLMSWLTFSLII) threads the bilayer. Positions 35–55 (NPPSNKTPTTTKTSPWTWPWT) are disordered. Over residues 37 to 55 (PSNKTPTTTKTSPWTWPWT) the composition is skewed to low complexity.

This sequence belongs to the ATPase protein 8 family. In terms of assembly, F-type ATPases have 2 components, CF(1) - the catalytic core - and CF(0) - the membrane proton channel.

Its subcellular location is the mitochondrion membrane. Functionally, mitochondrial membrane ATP synthase (F(1)F(0) ATP synthase or Complex V) produces ATP from ADP in the presence of a proton gradient across the membrane which is generated by electron transport complexes of the respiratory chain. F-type ATPases consist of two structural domains, F(1) - containing the extramembraneous catalytic core and F(0) - containing the membrane proton channel, linked together by a central stalk and a peripheral stalk. During catalysis, ATP synthesis in the catalytic domain of F(1) is coupled via a rotary mechanism of the central stalk subunits to proton translocation. Part of the complex F(0) domain. Minor subunit located with subunit a in the membrane. The polypeptide is ATP synthase protein 8 (MT-ATP8) (Corythaeola cristata (Great blue turaco)).